The chain runs to 202 residues: Small ribosomal subunit protein uS4 (202 aa).

Positions 22 to 43 (TRKSARRAYPPGQHGQNRKKRS) are disordered. Residues 90–152 (MRLDNTVFRL…APSRKLVENN (63 aa)) form the S4 RNA-binding domain.

This sequence belongs to the universal ribosomal protein uS4 family. In terms of assembly, part of the 30S ribosomal subunit. Contacts protein S5. The interaction surface between S4 and S5 is involved in control of translational fidelity.

One of the primary rRNA binding proteins, it binds directly to 16S rRNA where it nucleates assembly of the body of the 30S subunit. Functionally, with S5 and S12 plays an important role in translational accuracy. In Nostoc sp. (strain PCC 7120 / SAG 25.82 / UTEX 2576), this protein is Small ribosomal subunit protein uS4.